A 425-amino-acid chain; its full sequence is MLDLKFIRDNLDLVKRSIKARGLVLDIDKLIYLDDKRKKIITKIGELNAKRNENSSKMRENLDKVLKISLIETGKILKKQLIDLEEELERVSFDFDLENKRVPNILSPDVPIGNSEEDNFEIKKVGIIPRFDFKPKDHLELGRDLDLLDFDRAREVSGSKFYYLKNEAVFLEIALINFSLNKLREKGFNVFITPDVAREFIVDGIGFNPRGNESNIYKIEDTDKYLVGTSEITLGGYYYNKIIDLTLPIKMAGFSHCFRKEAGAYGQLSKGLYRVHQFSKVEMFCFCKAEESSIIHDEFLSIQEQIFTELEIPYRVLNICSFDLGSPAYKKYDIEAWMPGRDGKGGYGEITSTSNCTDYQSRRLKIRYKDQDGQNKFAHMVNGTAIATTRVIISILENFQDEKGGVKIPKSLVKYTGFDYIPFKN.

229 to 231 provides a ligand contact to L-serine; it reads TSE. ATP is bound by residues 259–261 and Val-275; that span reads RKE. Position 282 (Glu-282) interacts with L-serine. 349–352 is an ATP binding site; that stretch reads EITS. Thr-384 is an L-serine binding site.

This sequence belongs to the class-II aminoacyl-tRNA synthetase family. Type-1 seryl-tRNA synthetase subfamily. Homodimer. The tRNA molecule binds across the dimer.

It is found in the cytoplasm. The enzyme catalyses tRNA(Ser) + L-serine + ATP = L-seryl-tRNA(Ser) + AMP + diphosphate + H(+). It carries out the reaction tRNA(Sec) + L-serine + ATP = L-seryl-tRNA(Sec) + AMP + diphosphate + H(+). It functions in the pathway aminoacyl-tRNA biosynthesis; selenocysteinyl-tRNA(Sec) biosynthesis; L-seryl-tRNA(Sec) from L-serine and tRNA(Sec): step 1/1. Catalyzes the attachment of serine to tRNA(Ser). Is also able to aminoacylate tRNA(Sec) with serine, to form the misacylated tRNA L-seryl-tRNA(Sec), which will be further converted into selenocysteinyl-tRNA(Sec). The polypeptide is Serine--tRNA ligase (Borreliella afzelii (strain PKo) (Borrelia afzelii)).